The chain runs to 348 residues: Nicotinate-nucleotide--dimethylbenzimidazole phosphoribosyltransferase (348 aa).

E316 acts as the Proton acceptor in catalysis.

Belongs to the CobT family.

It catalyses the reaction 5,6-dimethylbenzimidazole + nicotinate beta-D-ribonucleotide = alpha-ribazole 5'-phosphate + nicotinate + H(+). The protein operates within nucleoside biosynthesis; alpha-ribazole biosynthesis; alpha-ribazole from 5,6-dimethylbenzimidazole: step 1/2. Functionally, catalyzes the synthesis of alpha-ribazole-5'-phosphate from nicotinate mononucleotide (NAMN) and 5,6-dimethylbenzimidazole (DMB). The polypeptide is Nicotinate-nucleotide--dimethylbenzimidazole phosphoribosyltransferase (Xanthomonas campestris pv. campestris (strain B100)).